The sequence spans 582 residues: Hemagglutinin-neuraminidase (582 aa).

A helical membrane pass occupies residues 35-55; sequence ILVLSVQAVTLILVIVTLGEL. Disulfide bonds link C178–C202, C192–C253, and C244–C257. N284 and N329 each carry an N-linked (GlcNAc...) asparagine; by host glycan. Disulfide bonds link C350-C471, C382-C392, and C465-C475. N-linked (GlcNAc...) asparagine; by host glycans are attached at residues N400 and N448. N507 is a glycosylation site (N-linked (GlcNAc...) asparagine; by host). An intrachain disulfide couples C545 to C556.

This sequence belongs to the paramyxoviruses hemagglutinin-neuraminidase family. In terms of assembly, homodimer. Further forms homotetramer (dimer of dimers). Interacts with F protein trimer.

It localises to the virion membrane. Its subcellular location is the host cell membrane. It carries out the reaction Hydrolysis of alpha-(2-&gt;3)-, alpha-(2-&gt;6)-, alpha-(2-&gt;8)- glycosidic linkages of terminal sialic acid residues in oligosaccharides, glycoproteins, glycolipids, colominic acid and synthetic substrates.. Its function is as follows. Attaches the virus to alpha-2,3-linked sialic acid-containing cell receptors and thereby initiating infection. Binding of HN protein to the receptor induces a conformational change that allows the F protein to trigger virion/cell membranes fusion. Binds to the glycan motifs sialyl Lewis (SLe) and GM2 ganglioside (GM2-glycan). Functionally, neuraminidase activity ensures the efficient spread of the virus by dissociating the mature virions from the neuraminic acid containing glycoproteins. This Homo sapiens (Human) protein is Hemagglutinin-neuraminidase (HN).